The sequence spans 142 residues: Small ribosomal subunit protein bS16 (142 aa).

The interval 88 to 142 is disordered; that stretch reads GAEGTLRQPEGKTPFVAPDNGSVIIPEAITPKAEKAEEAPAEDAAPAEDDAEKAE. The segment covering 126 to 142 has biased composition (acidic residues); that stretch reads APAEDAAPAEDDAEKAE.

Belongs to the bacterial ribosomal protein bS16 family.

The sequence is that of Small ribosomal subunit protein bS16 from Kocuria rhizophila (strain ATCC 9341 / DSM 348 / NBRC 103217 / DC2201).